Here is a 99-residue protein sequence, read N- to C-terminus: Malonate decarboxylase acyl carrier protein (99 aa).

The residue at position 25 (serine 25) is an O-(phosphoribosyl dephospho-coenzyme A)serine.

It belongs to the MdcC family. Post-translationally, covalently binds the prosthetic group of malonate decarboxylase.

It localises to the cytoplasm. Functionally, subunit of malonate decarboxylase, it is an acyl carrier protein to which acetyl and malonyl thioester residues are bound via a 2'-(5''-phosphoribosyl)-3'-dephospho-CoA prosthetic group and turn over during the catalytic mechanism. The protein is Malonate decarboxylase acyl carrier protein of Pseudomonas putida (strain GB-1).